Here is a 329-residue protein sequence, read N- to C-terminus: Malate dehydrogenase (329 aa).

12–18 (GAAGQIG) contacts NAD(+). Residues R93 and R99 each contribute to the substrate site. NAD(+)-binding positions include N106, Q113, and 130-132 (TGN). Residues N132 and R163 each contribute to the substrate site. H188 acts as the Proton acceptor in catalysis.

It belongs to the LDH/MDH superfamily. MDH type 2 family.

The enzyme catalyses (S)-malate + NAD(+) = oxaloacetate + NADH + H(+). Its function is as follows. Catalyzes the reversible oxidation of malate to oxaloacetate. This is Malate dehydrogenase from Mycolicibacterium paratuberculosis (strain ATCC BAA-968 / K-10) (Mycobacterium paratuberculosis).